We begin with the raw amino-acid sequence, 186 residues long: Large ribosomal subunit protein uL22 (186 aa).

The protein belongs to the universal ribosomal protein uL22 family. In terms of assembly, component of the large ribosomal subunit (LSU). Mature N.crassa ribosomes consist of a small (40S) and a large (60S) subunit. The 40S small subunit contains 1 molecule of ribosomal RNA (18S rRNA) and at least 32 different proteins. The large 60S subunit contains 3 rRNA molecules (26S, 5.8S and 5S rRNA) and at least 42 different proteins.

The protein localises to the cytoplasm. Functionally, component of the ribosome, a large ribonucleoprotein complex responsible for the synthesis of proteins in the cell. The small ribosomal subunit (SSU) binds messenger RNAs (mRNAs) and translates the encoded message by selecting cognate aminoacyl-transfer RNA (tRNA) molecules. The large subunit (LSU) contains the ribosomal catalytic site termed the peptidyl transferase center (PTC), which catalyzes the formation of peptide bonds, thereby polymerizing the amino acids delivered by tRNAs into a polypeptide chain. The nascent polypeptides leave the ribosome through a tunnel in the LSU and interact with protein factors that function in enzymatic processing, targeting, and the membrane insertion of nascent chains at the exit of the ribosomal tunnel. The chain is Large ribosomal subunit protein uL22 (rpl-17) from Neurospora crassa (strain ATCC 24698 / 74-OR23-1A / CBS 708.71 / DSM 1257 / FGSC 987).